We begin with the raw amino-acid sequence, 1305 residues long: Junctional cadherin 5-associated protein (1305 aa).

Disordered stretches follow at residues 13–86 (YKLS…PSTA), 120–151 (REQEAREDPGGRGPVPSLPTHPREGPWEVGGR), 249–419 (GVPK…HTTA), 450–545 (KLDG…CEMQ), 575–604 (IPVKSESQLPGTDTNNNDLKQSASLQEQSV), 616–795 (ALTG…SRQL), and 818–1005 (FNKE…GLSA). Basic and acidic residues-rich tracts occupy residues 21–31 (APHEDDGERRQ), 69–82 (PESRRLGPRGHGER), 120–129 (REQEAREDPG), and 140–151 (HPREGPWEVGGR). Pro residues predominate over residues 337–358 (GLEPPVYVPPPSYKSPPQPAAH). Basic and acidic residues predominate over residues 360–369 (CPEEAVSRHE). Composition is skewed to polar residues over residues 530-545 (LVSSPSPQGESSCEMQ) and 579-594 (SESQLPGTDTNNNDLK). Residues 595–604 (QSASLQEQSV) are compositionally biased toward low complexity. The segment covering 669–683 (QQTQTSFAHEPQSLQ) has biased composition (polar residues). A compositionally biased stretch (low complexity) spans 729-748 (SPKSQGSLSPSSNSAFSGSS). Residue serine 841 is modified to Phosphoserine. Composition is skewed to basic and acidic residues over residues 878-889 (SKSESWSEEGRP) and 945-958 (AKPEPPPDPAEQRE). Serine 1004, serine 1010, serine 1152, and serine 1239 each carry phosphoserine. Disordered regions lie at residues 1062 to 1166 (GAQR…DVET) and 1234 to 1305 (SRAA…VERV). Basic and acidic residues predominate over residues 1276 to 1288 (ADGHPAARRENGG).

Its subcellular location is the cell junction. The protein resides in the adherens junction. The chain is Junctional cadherin 5-associated protein (JCAD) from Bos taurus (Bovine).